The chain runs to 840 residues: Cullin-4 (840 aa).

The span at 1–11 (MTSGAPPTIST) shows a compositional bias: polar residues. The segment at 1–82 (MTSGAPPTIS…TGNSSRTTAT (82 aa)) is disordered. Residues 33–48 (TEAKQMRGDTENRSDG) show a composition bias toward basic and acidic residues. Residues 69 to 82 (FRSQTGNSSRTTAT) are compositionally biased toward polar residues. Residues 772–831 (DRQYKIDAAVVRIMKARKQLNHQTLMTELLQQLRFPVSTADIKKRLESLIEREYISRDPE) enclose the Cullin neddylation domain. A Glycyl lysine isopeptide (Lys-Gly) (interchain with G-Cter in NEDD8) cross-link involves residue K786.

Belongs to the cullin family. As to quaternary structure, part of an E3 ubiquitin-protein ligase complex including cul-4 and ddb-1. Neddylated. Deneddylated via its interaction with the COP9 signalosome (CSN) complex.

It participates in protein modification; protein ubiquitination. Functionally, component of cullin-based E3 ubiquitin-protein ligase complexes which mediate the ubiquitination and subsequent proteasomal degradation of target proteins. The functional specificity of the E3 ubiquitin-protein ligase complex depends on the variable substrate recognition component. In association with ddb-1 directs ubiquitination of cdt-1 during S phase and is required for restraining DNA rereplication. Probably is involved in ubiquitination of cki-1. The polypeptide is Cullin-4 (cul-4) (Caenorhabditis elegans).